Here is a 335-residue protein sequence, read N- to C-terminus: MSLDINQIALHQLIKRDEQNLELVLRDSLLEPTETVVEMVAELHRVYSAKNKAYGLFSEESELAQTLRLQRQGEEDFLAFSRAATGRLRDELAKYPFADGGFVLFCHYRYLAVEYLLVAVLSNLSSMRVNENLDINPTHYLDINHADIVARIDLTEWETNPESTRYLTFLKGRVGRKVADFFMDFLGASEGLNAKAQNRGLLQAVDDFTAEAQLDKAERQNVRQQVYSYCNEQLQAGEEIELESLSKELAGVSEVSFTEFAAEKGYELEESFPADRSTLRQLTKFAGSGGGLTINFDAMLLGERIFWDPATDTLTIKGTPPNLRDQLQRRTSGGN.

The protein belongs to the YejK family.

The protein resides in the cytoplasm. The protein localises to the nucleoid. The polypeptide is Nucleoid-associated protein YejK (Shigella dysenteriae serotype 1 (strain Sd197)).